Reading from the N-terminus, the 146-residue chain is Large ribosomal subunit protein uL11 (146 aa).

It belongs to the universal ribosomal protein uL11 family. As to quaternary structure, part of the ribosomal stalk of the 50S ribosomal subunit. Interacts with L10 and the large rRNA to form the base of the stalk. L10 forms an elongated spine to which L12 dimers bind in a sequential fashion forming a multimeric L10(L12)X complex. Post-translationally, one or more lysine residues are methylated.

Forms part of the ribosomal stalk which helps the ribosome interact with GTP-bound translation factors. In Wolbachia pipientis wMel, this protein is Large ribosomal subunit protein uL11.